A 197-amino-acid polypeptide reads, in one-letter code: Nucleoid occlusion factor SlmA (197 aa).

The HTH tetR-type domain maps to 7-67 (INRREHILQC…GLIEFIEESL (61 aa)). The H-T-H motif DNA-binding region spans 30–49 (TTAKLAAEVGVSEAALYRHF). A coiled-coil region spans residues 109–136 (DALLGENERLRSRISQLFAKIETHLKQI).

The protein belongs to the nucleoid occlusion factor SlmA family. As to quaternary structure, homodimer. Interacts with FtsZ.

Its subcellular location is the cytoplasm. It is found in the nucleoid. Its function is as follows. Required for nucleoid occlusion (NO) phenomenon, which prevents Z-ring formation and cell division over the nucleoid. Acts as a DNA-associated cell division inhibitor that binds simultaneously chromosomal DNA and FtsZ, and disrupts the assembly of FtsZ polymers. SlmA-DNA-binding sequences (SBS) are dispersed on non-Ter regions of the chromosome, preventing FtsZ polymerization at these regions. This chain is Nucleoid occlusion factor SlmA, found in Shewanella halifaxensis (strain HAW-EB4).